A 265-amino-acid polypeptide reads, in one-letter code: tRNA pseudouridine synthase A (265 aa).

Residue aspartate 58 is the Nucleophile of the active site. Tyrosine 116 contributes to the substrate binding site.

The protein belongs to the tRNA pseudouridine synthase TruA family. As to quaternary structure, homodimer.

The enzyme catalyses uridine(38/39/40) in tRNA = pseudouridine(38/39/40) in tRNA. In terms of biological role, formation of pseudouridine at positions 38, 39 and 40 in the anticodon stem and loop of transfer RNAs. This Neisseria meningitidis serogroup C (strain 053442) protein is tRNA pseudouridine synthase A.